A 96-amino-acid chain; its full sequence is UPF0235 protein Pfl01_5322 (96 aa).

The protein belongs to the UPF0235 family.

The chain is UPF0235 protein Pfl01_5322 from Pseudomonas fluorescens (strain Pf0-1).